The following is a 385-amino-acid chain: S-adenosylmethionine synthase (385 aa).

His14 contacts ATP. Residue Asp16 coordinates Mg(2+). K(+) is bound at residue Glu42. L-methionine-binding residues include Glu55 and Gln98. Residues 98-108 (QSGDIAQAVDN) form a flexible loop region. ATP is bound by residues 165–167 (DAK), 232–233 (RF), Asp241, 247–248 (RK), Ala264, and Lys268. Asp241 lines the L-methionine pocket. L-methionine is bound at residue Lys272.

This sequence belongs to the AdoMet synthase family. Homotetramer; dimer of dimers. Mg(2+) is required as a cofactor. K(+) serves as cofactor.

It localises to the cytoplasm. It carries out the reaction L-methionine + ATP + H2O = S-adenosyl-L-methionine + phosphate + diphosphate. The protein operates within amino-acid biosynthesis; S-adenosyl-L-methionine biosynthesis; S-adenosyl-L-methionine from L-methionine: step 1/1. Catalyzes the formation of S-adenosylmethionine (AdoMet) from methionine and ATP. The overall synthetic reaction is composed of two sequential steps, AdoMet formation and the subsequent tripolyphosphate hydrolysis which occurs prior to release of AdoMet from the enzyme. In Leuconostoc mesenteroides subsp. mesenteroides (strain ATCC 8293 / DSM 20343 / BCRC 11652 / CCM 1803 / JCM 6124 / NCDO 523 / NBRC 100496 / NCIMB 8023 / NCTC 12954 / NRRL B-1118 / 37Y), this protein is S-adenosylmethionine synthase.